A 256-amino-acid chain; its full sequence is Tumor necrosis factor receptor superfamily member 9 (256 aa).

Residues 1–23 (MGNNCYNVVVIVLLLVGCEKVGA) form the signal peptide. TNFR-Cys repeat units lie at residues 24–45 (VQNSCDNCQPGTFCRKYNPVCK), 46–85 (SCPPSTFSSIGGQPNCNICRVCAGYFRFKKFCSSTHNAEC), 86–117 (ECIEGFHCLGPQCTRCEKDCRPGQELTKQGCK), and 118–159 (TCSL…VVCG). At 24-187 (VQNSCDNCQP…GPGGHSLQVL (164 aa)) the chain is on the extracellular side. Intrachain disulfides connect cysteine 28–cysteine 37, cysteine 31–cysteine 44, cysteine 47–cysteine 61, cysteine 64–cysteine 77, cysteine 67–cysteine 85, cysteine 87–cysteine 93, cysteine 98–cysteine 105, cysteine 101–cysteine 116, and cysteine 119–cysteine 133. N-linked (GlcNAc...) asparagine glycans are attached at residues asparagine 128 and asparagine 138. A disulfide bridge links cysteine 139 with cysteine 158. Residues 188–208 (TLFLALTSALLLALIFITLLF) form a helical membrane-spanning segment. Topologically, residues 209–256 (SVLKWIRKKFPHIFKQPFKKTTGAAQEEDACSCRCPQEEEGGGGGYEL) are cytoplasmic.

In terms of assembly, predominantly homodimeric, but may also exist as a monomer. Associates with p56-LCK. Interacts with TRAF1, TRAF2 and TRAF3. As to expression, expressed in activated thymocytes, splenic T cells, CD4(+), and CD8(+) T-cells.

Its subcellular location is the cell membrane. Its function is as follows. Receptor for TNFSF9/4-1BBL. Conveys a signal that enhances CD8(+) T-cell survival, cytotoxicity, and mitochondrial activity, thereby promoting immunity against viruses and tumors. In Mus musculus (Mouse), this protein is Tumor necrosis factor receptor superfamily member 9 (Tnfrsf9).